Reading from the N-terminus, the 306-residue chain is 4-hydroxybenzoate geranyltransferase 2 (306 aa).

The next 8 helical transmembrane spans lie at 38–58 (IGSW…ADLG), 61–81 (PKML…GCTI), 119–139 (LFIG…LAIV), 153–173 (ITYW…LLGS), 178–198 (GSVV…WTLV), 229–249 (IWIT…GFIV), 251–271 (IGLP…WQIF), and 285–305 (FVSN…GRLF).

It belongs to the UbiA prenyltransferase family. Mg(2+) is required as a cofactor. As to expression, expressed only in roots.

Its subcellular location is the endoplasmic reticulum membrane. The catalysed reaction is 4-hydroxybenzoate + (2E)-geranyl diphosphate = 3-geranyl-4-hydroxybenzoate + diphosphate. Its function is as follows. Prenyltransferase involved in the biosynthesis of shikonin, a naphthoquinone secondary metabolite. Could accept only geranyl diphosphate and not dimethylallyl diphosphate, farnesyl diphosphate, or geranylgeranyl diphosphate as substrate. The polypeptide is 4-hydroxybenzoate geranyltransferase 2 (PGT-2) (Lithospermum erythrorhizon (Purple gromwell)).